A 561-amino-acid polypeptide reads, in one-letter code: Tudor and KH domain-containing protein (561 aa).

2 KH domains span residues 52 to 115 (DIEI…KAAI) and 124 to 190 (PVSE…KHLI). Glycyl lysine isopeptide (Lys-Gly) (interchain with G-Cter in ubiquitin) cross-links involve residues Lys-65, Lys-76, Lys-110, Lys-112, Lys-152, Lys-175, Lys-181, Lys-187, Lys-193, Lys-256, and Lys-267. The tract at residues 219–262 (SVRREDMTEPGGAGEPALWKNTSSSMEPTAPLVTPPPKGGGDMA) is disordered. Ser-278 bears the Phosphoserine mark. Positions 353-412 (TVHVGDIVAAPLPTNGSWYRARVLGTLENGNLDLYFVDFGDNGDCPLKDLRALRSDFLSL) constitute a Tudor domain. Glycyl lysine isopeptide (Lys-Gly) (interchain with G-Cter in ubiquitin) cross-links involve residues Lys-479, Lys-510, and Lys-529.

This sequence belongs to the Tdrkh family. As to quaternary structure, interacts with (symmetrically methylated) PIWIL1, PIWIL2 and PIWIL4. Ubiquitinated by PRKN during mitophagy, leading to its degradation and enhancement of mitophagy. Deubiquitinated by USP30.

It localises to the cytoplasm. The protein resides in the mitochondrion. Participates in the primary piRNA biogenesis pathway and is required during spermatogenesis to repress transposable elements and prevent their mobilization, which is essential for the germline integrity. The piRNA metabolic process mediates the repression of transposable elements during meiosis by forming complexes composed of piRNAs and Piwi proteins and govern the methylation and subsequent repression of transposons. Required for the final steps of primary piRNA biogenesis by participating in the processing of 31-37 nt intermediates into mature piRNAs. May act in pi-bodies and piP-bodies by transferring piRNA precursors or intermediates to or between these granules. The sequence is that of Tudor and KH domain-containing protein (TDRKH) from Homo sapiens (Human).